A 94-amino-acid chain; its full sequence is Pyrimidine/purine nucleoside phosphorylase (94 aa).

This sequence belongs to the nucleoside phosphorylase PpnP family.

The catalysed reaction is a purine D-ribonucleoside + phosphate = a purine nucleobase + alpha-D-ribose 1-phosphate. The enzyme catalyses adenosine + phosphate = alpha-D-ribose 1-phosphate + adenine. It carries out the reaction cytidine + phosphate = cytosine + alpha-D-ribose 1-phosphate. It catalyses the reaction guanosine + phosphate = alpha-D-ribose 1-phosphate + guanine. The catalysed reaction is inosine + phosphate = alpha-D-ribose 1-phosphate + hypoxanthine. The enzyme catalyses thymidine + phosphate = 2-deoxy-alpha-D-ribose 1-phosphate + thymine. It carries out the reaction uridine + phosphate = alpha-D-ribose 1-phosphate + uracil. It catalyses the reaction xanthosine + phosphate = alpha-D-ribose 1-phosphate + xanthine. Functionally, catalyzes the phosphorolysis of diverse nucleosides, yielding D-ribose 1-phosphate and the respective free bases. Can use uridine, adenosine, guanosine, cytidine, thymidine, inosine and xanthosine as substrates. Also catalyzes the reverse reactions. The sequence is that of Pyrimidine/purine nucleoside phosphorylase from Vibrio parahaemolyticus serotype O3:K6 (strain RIMD 2210633).